The chain runs to 908 residues: Alanine--tRNA ligase (908 aa).

4 residues coordinate Zn(2+): histidine 588, histidine 592, cysteine 691, and histidine 695.

The protein belongs to the class-II aminoacyl-tRNA synthetase family. The cofactor is Zn(2+).

The protein localises to the cytoplasm. It carries out the reaction tRNA(Ala) + L-alanine + ATP = L-alanyl-tRNA(Ala) + AMP + diphosphate. Catalyzes the attachment of alanine to tRNA(Ala) in a two-step reaction: alanine is first activated by ATP to form Ala-AMP and then transferred to the acceptor end of tRNA(Ala). Also edits incorrectly charged Ser-tRNA(Ala) and Gly-tRNA(Ala) via its editing domain. In Mycobacterium leprae (strain TN), this protein is Alanine--tRNA ligase.